The sequence spans 404 residues: Glucose-1-phosphate adenylyltransferase (404 aa).

Residues tyrosine 99, glycine 164, 179–180 (EK), and serine 197 contribute to the alpha-D-glucose 1-phosphate site.

The protein belongs to the bacterial/plant glucose-1-phosphate adenylyltransferase family. In terms of assembly, homotetramer.

The enzyme catalyses alpha-D-glucose 1-phosphate + ATP + H(+) = ADP-alpha-D-glucose + diphosphate. It functions in the pathway glycan biosynthesis; glycogen biosynthesis. Involved in the biosynthesis of ADP-glucose, a building block required for the elongation reactions to produce glycogen. Catalyzes the reaction between ATP and alpha-D-glucose 1-phosphate (G1P) to produce pyrophosphate and ADP-Glc. The chain is Glucose-1-phosphate adenylyltransferase from Rhodococcus erythropolis (strain PR4 / NBRC 100887).